The primary structure comprises 628 residues: tRNA uridine 5-carboxymethylaminomethyl modification enzyme MnmG (628 aa).

G13–G18 is an FAD binding site. G281–F295 serves as a coordination point for NAD(+).

The protein belongs to the MnmG family. As to quaternary structure, homodimer. Heterotetramer of two MnmE and two MnmG subunits. FAD is required as a cofactor.

It localises to the cytoplasm. Functionally, NAD-binding protein involved in the addition of a carboxymethylaminomethyl (cmnm) group at the wobble position (U34) of certain tRNAs, forming tRNA-cmnm(5)s(2)U34. This chain is tRNA uridine 5-carboxymethylaminomethyl modification enzyme MnmG, found in Treponema denticola (strain ATCC 35405 / DSM 14222 / CIP 103919 / JCM 8153 / KCTC 15104).